We begin with the raw amino-acid sequence, 348 residues long: Uroporphyrinogen decarboxylase (348 aa).

Substrate-binding positions include 29 to 33 (RQAGR), D79, Y155, T210, and H326.

Belongs to the uroporphyrinogen decarboxylase family. In terms of assembly, homodimer.

The protein resides in the cytoplasm. The enzyme catalyses uroporphyrinogen III + 4 H(+) = coproporphyrinogen III + 4 CO2. The protein operates within porphyrin-containing compound metabolism; protoporphyrin-IX biosynthesis; coproporphyrinogen-III from 5-aminolevulinate: step 4/4. In terms of biological role, catalyzes the decarboxylation of four acetate groups of uroporphyrinogen-III to yield coproporphyrinogen-III. In Rhodospirillum rubrum (strain ATCC 11170 / ATH 1.1.1 / DSM 467 / LMG 4362 / NCIMB 8255 / S1), this protein is Uroporphyrinogen decarboxylase.